Here is a 424-residue protein sequence, read N- to C-terminus: GTPase Obg (424 aa).

The region spanning 1–160 (MFDRVEIRIK…YELILELKLI (160 aa)) is the Obg domain. The region spanning 161-328 (ADVAIIGYPN…LLDKVAEKLA (168 aa)) is the OBG-type G domain. GTP-binding positions include 167 to 174 (GYPNVGKS), 192 to 196 (FTTLS), 213 to 216 (EVPG), 280 to 283 (NKID), and 309 to 311 (SAL). Positions 174 and 194 each coordinate Mg(2+). Positions 349–424 (PAPKGKMGFH…IITGRLEWYL (76 aa)) constitute an OCT domain.

The protein belongs to the TRAFAC class OBG-HflX-like GTPase superfamily. OBG GTPase family. Monomer. Mg(2+) is required as a cofactor.

Its subcellular location is the cytoplasm. Its function is as follows. An essential GTPase which binds GTP, GDP and possibly (p)ppGpp with moderate affinity, with high nucleotide exchange rates and a fairly low GTP hydrolysis rate. Plays a role in control of the cell cycle, stress response, ribosome biogenesis and in those bacteria that undergo differentiation, in morphogenesis control. This Dehalococcoides mccartyi (strain ATCC BAA-2266 / KCTC 15142 / 195) (Dehalococcoides ethenogenes (strain 195)) protein is GTPase Obg.